A 74-amino-acid chain; its full sequence is Protein sok (74 aa).

The tract at residues 26 to 45 (TQHGNKPPSRHEAESLKRRA) is disordered.

This chain is Protein sok (sok), found in Escherichia coli.